A 415-amino-acid chain; its full sequence is MRSWSSPQVPQLPGRGPELRLYDTSDRQVRPVAAGAGPGSAATMYVCGITPYDATHLGHAATYLAFDLIYRQWLDLGHDVHYVQNVTDVDDPLLERAARDGVDWRALAEREVSLFREDMAALRILAPRDYVGATEAIADVVELVEKMLASGAAYVVDGEFPDIYYRADATLQFGYESGYDRETMLRLFAERGGDPQRPGKTDALDALLWRAARPGEPSWPSPFGNGRPGWHVECAAIALSRIGSGLDIQGGGSDLIFPHHEFTAAHAECVRGERRFARHYVHAGMIGWDGHKMSKSRGNLVLVSQLRGRGVEPAAIRLGLLAGHYRGDRYWSDQVLDEATARLRRWRTATALPAGPDATDVIARVRQYLADDLNTPKALAALDGWTTDALDYGGHDTAAPRLVASAVDALLGVAL.

C47 provides a ligand contact to Zn(2+). Residues 47–50 (CGIT), T62, and 85–87 (NVT) each bind L-cysteinyl-5'-AMP. The 'HIGH' region motif lies at 49–59 (ITPYDATHLGH). The 'ERGGDP' region motif lies at 190-195 (ERGGDP). W230 contributes to the L-cysteinyl-5'-AMP binding site. A Zn(2+)-binding site is contributed by C234. 252-254 (GSD) is an L-cysteinyl-5'-AMP binding site. H259 contacts Zn(2+). Residue I286 participates in L-cysteinyl-5'-AMP binding. Residues 292–296 (KMSKS) carry the 'KMSKS' region motif.

The protein belongs to the class-I aminoacyl-tRNA synthetase family. MshC subfamily. Monomer. Zn(2+) serves as cofactor.

It carries out the reaction 1D-myo-inositol 2-amino-2-deoxy-alpha-D-glucopyranoside + L-cysteine + ATP = 1D-myo-inositol 2-(L-cysteinylamino)-2-deoxy-alpha-D-glucopyranoside + AMP + diphosphate + H(+). In terms of biological role, catalyzes the ATP-dependent condensation of GlcN-Ins and L-cysteine to form L-Cys-GlcN-Ins. The polypeptide is L-cysteine:1D-myo-inositol 2-amino-2-deoxy-alpha-D-glucopyranoside ligase (mshC) (Mycolicibacterium paratuberculosis (strain ATCC BAA-968 / K-10) (Mycobacterium paratuberculosis)).